The following is a 526-amino-acid chain: Probable feruloyl esterase B (526 aa).

Positions 1-18 are cleaved as a signal peptide; the sequence is MARLSLLTLLALGSAALA. 2 cysteine pairs are disulfide-bonded: C27-C74 and C62-C113. N137 carries N-linked (GlcNAc...) asparagine glycosylation. Intrachain disulfides connect C186–C441, C255–C272, C281–C291, and C503–C525. S187 acts as the Acyl-ester intermediate in catalysis. N233 carries N-linked (GlcNAc...) asparagine glycosylation. Ca(2+)-binding residues include D256, D259, A261, D263, and I265. Residue N311 is glycosylated (N-linked (GlcNAc...) asparagine). Residues D400 and H440 each act as charge relay system in the active site. The N-linked (GlcNAc...) asparagine glycan is linked to N516.

The protein belongs to the tannase family.

Its subcellular location is the secreted. The enzyme catalyses feruloyl-polysaccharide + H2O = ferulate + polysaccharide.. Functionally, involved in degradation of plant cell walls. Hydrolyzes the feruloyl-arabinose ester bond in arabinoxylans as well as the feruloyl-galactose and feruloyl-arabinose ester bonds in pectin. The chain is Probable feruloyl esterase B (faeB) from Aspergillus clavatus (strain ATCC 1007 / CBS 513.65 / DSM 816 / NCTC 3887 / NRRL 1 / QM 1276 / 107).